A 192-amino-acid chain; its full sequence is uncharacterized protein (192 aa).

In terms of domain architecture, Nudix hydrolase spans 29 to 160 (QRQAAVLIPV…PLDVYRRGNS (132 aa)). Positions 67–89 (GAVDSTDASLIAAALREAQEEVA) match the Nudix box motif. 2 residues coordinate Mg(2+): E83 and E87.

This sequence belongs to the Nudix hydrolase family. PCD1 subfamily. It depends on Mn(2+) as a cofactor. Requires Mg(2+) as cofactor.

Probably mediates the hydrolysis of some nucleoside diphosphate derivatives. This is an uncharacterized protein from Salmonella choleraesuis (strain SC-B67).